A 689-amino-acid polypeptide reads, in one-letter code: Potassium-transporting ATPase ATP-binding subunit (689 aa).

4 consecutive transmembrane segments (helical) span residues 35-55, 62-82, 220-240, and 260-280; these read VMFVVYIGSILTTAIWLAILA, AAFTGSIAMWLWFTVLFANFA, ALTILLVALTLVFVLATATLF, and VLVALLVCLIPTTIGGLLSAI. D313 functions as the 4-aspartylphosphate intermediate in the catalytic mechanism. Residues D350, E354, 383–390, and K401 contribute to the ATP site; that span reads FSAQTRMS. Mg(2+) is bound by residues D524 and D528. 3 helical membrane-spanning segments follow: residues 594-614, 622-642, and 665-685; these read FAIIPAAFAATYPQLNALNVM, AIMSAVIFNALVIVFLIPLAL, and VGGLLVPFVGIKLIDLLLVAL.

The protein belongs to the cation transport ATPase (P-type) (TC 3.A.3) family. Type IA subfamily. In terms of assembly, the system is composed of three essential subunits: KdpA, KdpB and KdpC.

It localises to the cell inner membrane. The catalysed reaction is K(+)(out) + ATP + H2O = K(+)(in) + ADP + phosphate + H(+). Part of the high-affinity ATP-driven potassium transport (or Kdp) system, which catalyzes the hydrolysis of ATP coupled with the electrogenic transport of potassium into the cytoplasm. This subunit is responsible for energy coupling to the transport system and for the release of the potassium ions to the cytoplasm. This chain is Potassium-transporting ATPase ATP-binding subunit, found in Serratia proteamaculans (strain 568).